The primary structure comprises 641 residues: Mediator of RNA polymerase II transcription subunit 17 (641 aa).

The stretch at 159–186 (RLQSFNAAADKLLKSAARLETEVASETR) forms a coiled coil.

This sequence belongs to the Mediator complex subunit 17 family. As to quaternary structure, component of the Mediator complex.

The protein localises to the nucleus. Functionally, component of the Mediator complex, a coactivator involved in the regulated transcription of nearly all RNA polymerase II-dependent genes. Mediator functions as a bridge to convey information from gene-specific regulatory proteins to the basal RNA polymerase II transcription machinery. Mediator is recruited to promoters by direct interactions with regulatory proteins and serves as a scaffold for the assembly of a functional preinitiation complex with RNA polymerase II and the general transcription factors. The chain is Mediator of RNA polymerase II transcription subunit 17 (srb4) from Aspergillus clavatus (strain ATCC 1007 / CBS 513.65 / DSM 816 / NCTC 3887 / NRRL 1 / QM 1276 / 107).